Reading from the N-terminus, the 221-residue chain is Hydrogenase expression/formation protein HupD (221 aa).

Ni(2+)-binding residues include Glu-20, Asp-66, and His-97.

Belongs to the peptidase A31 family.

In terms of biological role, not known. Could be involved in the processing of hydrogenase. The polypeptide is Hydrogenase expression/formation protein HupD (hupD) (Thiocapsa roseopersicina).